Reading from the N-terminus, the 304-residue chain is Syntaxin-132 (304 aa).

Met1 bears the N-acetylmethionine mark. The disordered stretch occupies residues Met1–Gly30. Residues Met1–Lys275 are Cytoplasmic-facing. Coiled-coil stretches lie at residues Leu34–Ser67 and Thr129–Val162. The region spanning Leu204–Ala266 is the t-SNARE coiled-coil homology domain. A helical; Anchor for type IV membrane protein membrane pass occupies residues Trp276–Leu296. Topologically, residues Lys297–Ala304 are vesicular.

This sequence belongs to the syntaxin family. In terms of assembly, part of the t-SNARE complex. As to expression, widely expressed in all tissues throughout plant development.

The protein localises to the cell membrane. Vesicle trafficking protein that functions in the secretory pathway. Acts in coordination with SYP123 to mediate tip-focused membrane trafficking for root hair tip growth. Functions in root hair elongation by forming SNARE complexes with VAMP721,VAMP722 or VAMP724. Involved in cytokinesis. Acts as a cell plate-specific syntaxin, required for the fusion of vesicles at the plane of cell division. Required for secretory trafficking to the plasma membrane during interphase. Involved in the regulation of density of the H(+) ATPase proteins at the plasma membrane of root and shoot in epidermal cells. Modulation of SYP132 expression by auxin affects clathrin-sensitive H(+) ATPase traffic from the plasma membrane, and influences apoplastic acidification and plant growth. The sequence is that of Syntaxin-132 from Arabidopsis thaliana (Mouse-ear cress).